The following is a 175-amino-acid chain: ATP synthase subunit b, chloroplastic (175 aa).

A helical membrane pass occupies residues 21 to 40; sequence LLESNVINIIILISLLIYLG.

Belongs to the ATPase B chain family. F-type ATPases have 2 components, F(1) - the catalytic core - and F(0) - the membrane proton channel. F(1) has five subunits: alpha(3), beta(3), gamma(1), delta(1), epsilon(1). F(0) has four main subunits: a(1), b(1), b'(1) and c(10-14). The alpha and beta chains form an alternating ring which encloses part of the gamma chain. F(1) is attached to F(0) by a central stalk formed by the gamma and epsilon chains, while a peripheral stalk is formed by the delta, b and b' chains.

Its subcellular location is the plastid. It is found in the chloroplast thylakoid membrane. In terms of biological role, f(1)F(0) ATP synthase produces ATP from ADP in the presence of a proton or sodium gradient. F-type ATPases consist of two structural domains, F(1) containing the extramembraneous catalytic core and F(0) containing the membrane proton channel, linked together by a central stalk and a peripheral stalk. During catalysis, ATP synthesis in the catalytic domain of F(1) is coupled via a rotary mechanism of the central stalk subunits to proton translocation. Component of the F(0) channel, it forms part of the peripheral stalk, linking F(1) to F(0). The protein is ATP synthase subunit b, chloroplastic of Cyanidium caldarium (Red alga).